We begin with the raw amino-acid sequence, 155 residues long: Myosin light chain alkali (155 aa).

EF-hand domains follow at residues 7-41 and 80-115; these read REVE…LNLN and GCYE…LGES.

In terms of assembly, myosin is a hexamer of 2 heavy chains and 4 light chains.

The chain is Myosin light chain alkali (Mlc1) from Drosophila simulans (Fruit fly).